A 138-amino-acid polypeptide reads, in one-letter code: Probable glycine cleavage system H protein 1 (138 aa).

The 83-residue stretch at 30–112 (IATVGITDYA…YGRGWIFKLK (83 aa)) folds into the Lipoyl-binding domain. Position 71 is an N6-lipoyllysine (K71).

This sequence belongs to the GcvH family. The glycine cleavage system is composed of four proteins: P, T, L and H. (R)-lipoate serves as cofactor.

Functionally, the glycine cleavage system catalyzes the degradation of glycine. The H protein shuttles the methylamine group of glycine from the P protein to the T protein. This chain is Probable glycine cleavage system H protein 1, found in Sulfolobus acidocaldarius (strain ATCC 33909 / DSM 639 / JCM 8929 / NBRC 15157 / NCIMB 11770).